Consider the following 125-residue polypeptide: Cytochrome c-556 (125 aa).

M13, C113, C116, and H117 together coordinate heme. Positions 13, 113, 116, and 117 each coordinate heme c.

As to quaternary structure, monomer. Binds 1 heme c group covalently per subunit.

Low-spin monoheme cytochrome c. This Agrobacterium tumefaciens (strain apple 185) protein is Cytochrome c-556.